We begin with the raw amino-acid sequence, 438 residues long: 23S rRNA (uracil(1939)-C(5))-methyltransferase RlmD (438 aa).

The TRAM domain occupies 8 to 68 (KQKTNNVQTI…RQYGHATAKK (61 aa)). [4Fe-4S] cluster-binding residues include cysteine 81, cysteine 87, cysteine 90, and cysteine 168. S-adenosyl-L-methionine contacts are provided by glutamine 271, phenylalanine 300, asparagine 305, glutamate 321, aspartate 348, and aspartate 369. The Nucleophile role is filled by cysteine 395.

This sequence belongs to the class I-like SAM-binding methyltransferase superfamily. RNA M5U methyltransferase family. RlmD subfamily.

The catalysed reaction is uridine(1939) in 23S rRNA + S-adenosyl-L-methionine = 5-methyluridine(1939) in 23S rRNA + S-adenosyl-L-homocysteine + H(+). Catalyzes the formation of 5-methyl-uridine at position 1939 (m5U1939) in 23S rRNA. The polypeptide is 23S rRNA (uracil(1939)-C(5))-methyltransferase RlmD (Haemophilus influenzae (strain 86-028NP)).